We begin with the raw amino-acid sequence, 396 residues long: uncharacterized protein (396 aa).

Helical transmembrane passes span Leu27 to Leu47 and Phe69 to Phe89. The short motif at His117 to Asp122 is the HXXXXD motif element. The next 2 helical transmembrane spans lie at Trp123–Leu143 and Leu372–Met392.

The protein belongs to the 1-acyl-sn-glycerol-3-phosphate acyltransferase family.

It localises to the membrane. This is an uncharacterized protein from Saccharomyces cerevisiae (strain ATCC 204508 / S288c) (Baker's yeast).